The sequence spans 25 residues: Small ribosomal subunit protein eS32 (25 aa).

Residues 1–25 (MRAKWRKKRVRRLKRKRRKTRARSK) are disordered.

Belongs to the eukaryotic ribosomal protein eS32 family. Component of the small ribosomal subunit.

The polypeptide is Small ribosomal subunit protein eS32 (RPL41) (Quercus suber (Cork oak)).